A 206-amino-acid chain; its full sequence is N-(5'-phosphoribosyl)anthranilate isomerase (206 aa).

It belongs to the TrpF family.

The catalysed reaction is N-(5-phospho-beta-D-ribosyl)anthranilate = 1-(2-carboxyphenylamino)-1-deoxy-D-ribulose 5-phosphate. The protein operates within amino-acid biosynthesis; L-tryptophan biosynthesis; L-tryptophan from chorismate: step 3/5. This chain is N-(5'-phosphoribosyl)anthranilate isomerase, found in Pseudomonas putida (strain ATCC 47054 / DSM 6125 / CFBP 8728 / NCIMB 11950 / KT2440).